The chain runs to 295 residues: Protease HtpX homolog (295 aa).

2 helical membrane passes run I6–V26 and L40–L60. Position 148 (H148) interacts with Zn(2+). Residue E149 is part of the active site. H152 provides a ligand contact to Zn(2+). The next 2 helical transmembrane spans lie at L163 to L183 and I198 to F218. E223 provides a ligand contact to Zn(2+).

This sequence belongs to the peptidase M48B family. Requires Zn(2+) as cofactor.

Its subcellular location is the cell inner membrane. This Leptospira borgpetersenii serovar Hardjo-bovis (strain JB197) protein is Protease HtpX homolog.